Here is a 602-residue protein sequence, read N- to C-terminus: Elongation factor 4 (602 aa).

A tr-type G domain is found at Asp-8–Lys-190. Residues Asp-20–Thr-25 and Asn-137–Asp-140 each bind GTP.

Belongs to the TRAFAC class translation factor GTPase superfamily. Classic translation factor GTPase family. LepA subfamily.

The protein resides in the cell inner membrane. The catalysed reaction is GTP + H2O = GDP + phosphate + H(+). Required for accurate and efficient protein synthesis under certain stress conditions. May act as a fidelity factor of the translation reaction, by catalyzing a one-codon backward translocation of tRNAs on improperly translocated ribosomes. Back-translocation proceeds from a post-translocation (POST) complex to a pre-translocation (PRE) complex, thus giving elongation factor G a second chance to translocate the tRNAs correctly. Binds to ribosomes in a GTP-dependent manner. The chain is Elongation factor 4 from Cereibacter sphaeroides (strain ATCC 17023 / DSM 158 / JCM 6121 / CCUG 31486 / LMG 2827 / NBRC 12203 / NCIMB 8253 / ATH 2.4.1.) (Rhodobacter sphaeroides).